Reading from the N-terminus, the 237-residue chain is Sugar fermentation stimulation protein homolog (237 aa).

It belongs to the SfsA family.

The chain is Sugar fermentation stimulation protein homolog from Pseudomonas putida (strain ATCC 47054 / DSM 6125 / CFBP 8728 / NCIMB 11950 / KT2440).